A 210-amino-acid polypeptide reads, in one-letter code: Na(+)-translocating NADH-quinone reductase subunit D (210 aa).

Helical transmembrane passes span Phe42–Ile62, Ile72–Ala92, Val103–Met123, Phe131–Val151, and Asn178–Val198.

This sequence belongs to the NqrDE/RnfAE family. In terms of assembly, composed of six subunits; NqrA, NqrB, NqrC, NqrD, NqrE and NqrF.

Its subcellular location is the cell inner membrane. It catalyses the reaction a ubiquinone + n Na(+)(in) + NADH + H(+) = a ubiquinol + n Na(+)(out) + NAD(+). In terms of biological role, NQR complex catalyzes the reduction of ubiquinone-1 to ubiquinol by two successive reactions, coupled with the transport of Na(+) ions from the cytoplasm to the periplasm. NqrA to NqrE are probably involved in the second step, the conversion of ubisemiquinone to ubiquinol. The sequence is that of Na(+)-translocating NADH-quinone reductase subunit D from Aeromonas salmonicida (strain A449).